The sequence spans 962 residues: MTKQTLTQLEQHELFLTRHIGPNAEQQQEMLNFIGAESLEDLTAQTVPGKIRLPQDLTIGDSCGEAEGIAYIRNIADKNKVFKSYIGMGYYGVQVPNVILRNVFENPGWYTAYTPYQPEIAQGRLEAILNFQQVSMDLTGLDLASASLLDEATAAAEAMALAKRVSKAKKANIFFVADDVFPQTLDVVKTRAECFGFEVVVGPASEAVNYELFGALFQYTNRIGQITDYTELFATLRDNKVIVTVAADIMSLMLLKSPGAMGADVVFGSAQRFGVPMGYGGPHAAFFVARDEHKRSMPGRIIGVSKDTRGNSALRMAMQTREQHIRREKANSNICTAQILLANMASFYAVFHGPQGLKTIASRINRLADILAAGLTAKGLTLANTTWFDTISVKGADVAAINARAIAAQVNLRIDADGVFGISLDETTIRTDIADLFDVILGAGHGLDVATFDADIVANGSQSIPDALVRQDAVLTHPTFNRYQSETEMMRYIKRLENKDLALNHSMISLGSCTMKLNAAVEMLPVSWPEFANMHPFCPLDQAQGYTQLINELSEFLVKITGYDSVCIQPNSGAQGEYAGLLAIKKYHESRGDAHRNICLIPQSAHGTNPASAQLAGMKVVVTACDKQGNVDLEDLRTKAAELADSLSCIMITYPSTHGVYEESIREVCEIVHQYGGQVYLDGANMNAQVGLTSPGFIGADVSHLNLHKTFAIPHGGGGPGMGPIGVKSHLAPFVAGHTVIKPGRESDHNGAVSAAPYGSASILPISWMYIKLLGTKGVKQSTQTALLNANYIMKKLSAHYPVLFTGRNDRVAHECIIDLRPLKETSGVTEMDIAKRLNDYGFHSPTMSFPVAGTLMIEPTESESKVELDRFIEAMISIRGEITKVEAGEWPVDNNPLHNAPHTLADIMDPEFDSRPYSREVAVFPTAAVKANKFWPTVNRIDDVYGDRNLMCSCVPLSDYE.

At Lys-709 the chain carries N6-(pyridoxal phosphate)lysine.

The protein belongs to the GcvP family. In terms of assembly, the glycine cleavage system is composed of four proteins: P, T, L and H. Pyridoxal 5'-phosphate serves as cofactor.

It catalyses the reaction N(6)-[(R)-lipoyl]-L-lysyl-[glycine-cleavage complex H protein] + glycine + H(+) = N(6)-[(R)-S(8)-aminomethyldihydrolipoyl]-L-lysyl-[glycine-cleavage complex H protein] + CO2. In terms of biological role, the glycine cleavage system catalyzes the degradation of glycine. The P protein binds the alpha-amino group of glycine through its pyridoxal phosphate cofactor; CO(2) is released and the remaining methylamine moiety is then transferred to the lipoamide cofactor of the H protein. The sequence is that of Glycine dehydrogenase (decarboxylating) from Shewanella frigidimarina (strain NCIMB 400).